Reading from the N-terminus, the 62-residue chain is MSKGTPSQGKHNKGSNHIICRRCGRRSYHVRKKACSACGFGASKRLKTFAWKNKKINGQRVR.

The Zn(2+) site is built by C20, C23, C35, and C38. Residues 20–38 (CRRCGRRSYHVRKKACSAC) form a C4-type zinc finger.

The protein belongs to the eukaryotic ribosomal protein eL37 family. It depends on Zn(2+) as a cofactor.

Functionally, binds to the 23S rRNA. This chain is Large ribosomal subunit protein eL37, found in Methanococcus aeolicus (strain ATCC BAA-1280 / DSM 17508 / OCM 812 / Nankai-3).